Here is a 620-residue protein sequence, read N- to C-terminus: Ran-binding protein 10 (620 aa).

The interval 1 to 41 is disordered; it reads MAAATADPGAGNPQPGDSSGGGAGGGLPSPGEQELSRRLQR. Ala-2 is modified (N-acetylalanine). The span at 18–28 shows a compositional bias: gly residues; the sequence is SSGGGAGGGLP. The region spanning 35 to 222 is the B30.2/SPRY domain; sequence LSRRLQRLYP…VDANFGQQPF (188 aa). Residues 253–285 form the LisH domain; the sequence is WQAVLQNMVSSYLVHHGYCATATAFARMTETPI. The CTLH domain occupies 291 to 348; the sequence is SIKNRQKIQKLVLEGRVGEAIETTQRFYPGLLEHNPNLLFMLKCRQFVEMVNGTDSEV. Polar residues predominate over residues 347 to 398; sequence EVRSLSSRSPKSQDSYPGSPSLSPRHGPSSSHMHNTGADSPSCSNGVASTKS. The tract at residues 347–458 is disordered; the sequence is EVRSLSSRSP…ETSDSEMEME (112 aa). The residue at position 361 (Ser-361) is a Phosphoserine. Tyr-362 bears the Phosphotyrosine mark. A phosphoserine mark is found at Ser-365, Ser-367, Ser-369, Ser-422, Ser-451, and Ser-453. Low complexity predominate over residues 409 to 436; sequence SSSSSSSSSSSSSSPSSVNYSESNSTDS.

It belongs to the RANBP9/10 family. May form homodimers. Identified in the CTLH complex that contains GID4, RANBP9 and/or RANBP10, MKLN1, MAEA, RMND5A (or alternatively its paralog RMND5B), GID8, ARMC8, WDR26 and YPEL5. Within this complex, MAEA, RMND5A (or alternatively its paralog RMND5B), GID8, WDR26, and RANBP9 and/or RANBP10 form the catalytic core, while GID4, MKLN1, ARMC8 and YPEL5 have ancillary roles. Interacts with RAN and RANBP9. Interacts with the HGF receptor MET. Interacts with AR. Interacts with TUBB1. Interacts with YPEL5. May interact with TUBB5. Interacts with DDX4. Broadly expressed, with highest levels in skeletal muscle.

The protein localises to the cytoplasm. It is found in the cytosol. It localises to the nucleus. Functionally, may act as an adapter protein to couple membrane receptors to intracellular signaling pathways. Core component of the CTLH E3 ubiquitin-protein ligase complex that selectively accepts ubiquitin from UBE2H and mediates ubiquitination and subsequent proteasomal degradation of the transcription factor HBP1. Enhances dihydrotestosterone-induced transactivation activity of AR, as well as dexamethasone-induced transactivation activity of NR3C1, but does not affect estrogen-induced transactivation. Acts as a guanine nucleotide exchange factor (GEF) for RAN GTPase. May play an essential role in hemostasis and in maintaining microtubule dynamics with respect to both platelet shape and function. The polypeptide is Ran-binding protein 10 (RANBP10) (Homo sapiens (Human)).